Here is a 428-residue protein sequence, read N- to C-terminus: NADP-specific glutamate dehydrogenase (428 aa).

Positions 68 and 92 each coordinate substrate. Catalysis depends on Lys-104, which acts as the Proton donor. NADP(+) is bound by residues Thr-188 and Asn-219. A substrate-binding site is contributed by Ser-356.

Belongs to the Glu/Leu/Phe/Val dehydrogenases family. In terms of assembly, homohexamer.

It carries out the reaction L-glutamate + NADP(+) + H2O = 2-oxoglutarate + NH4(+) + NADPH + H(+). Functionally, catalyzes the reversible oxidative deamination of glutamate to alpha-ketoglutarate and ammonia. The protein is NADP-specific glutamate dehydrogenase (gdhA) of Synechocystis sp. (strain ATCC 27184 / PCC 6803 / Kazusa).